The chain runs to 415 residues: Phosphoribosylamine--glycine ligase (415 aa).

The ATP-grasp domain maps to 108-311 (KKIMEKYNIP…LMQHIIDLDE (204 aa)). 134 to 191 (IENCELPVVVKKDGLAAGKGVIIADTIEAARSAIEIMYGDEEEGTVVFETFLEGEEFS) lines the ATP pocket. Residues glutamate 281 and asparagine 283 each coordinate Mg(2+).

The protein belongs to the GARS family. It depends on Mg(2+) as a cofactor. Mn(2+) is required as a cofactor.

The catalysed reaction is 5-phospho-beta-D-ribosylamine + glycine + ATP = N(1)-(5-phospho-beta-D-ribosyl)glycinamide + ADP + phosphate + H(+). It participates in purine metabolism; IMP biosynthesis via de novo pathway; N(1)-(5-phospho-D-ribosyl)glycinamide from 5-phospho-alpha-D-ribose 1-diphosphate: step 2/2. In Staphylococcus aureus (strain COL), this protein is Phosphoribosylamine--glycine ligase.